A 213-amino-acid chain; its full sequence is ATP-dependent Clp protease proteolytic subunit 3 (213 aa).

Serine 107 (nucleophile) is an active-site residue. Histidine 132 is a catalytic residue.

This sequence belongs to the peptidase S14 family. In terms of assembly, fourteen ClpP subunits assemble into 2 heptameric rings which stack back to back to give a disk-like structure with a central cavity, resembling the structure of eukaryotic proteasomes.

Its subcellular location is the cytoplasm. The catalysed reaction is Hydrolysis of proteins to small peptides in the presence of ATP and magnesium. alpha-casein is the usual test substrate. In the absence of ATP, only oligopeptides shorter than five residues are hydrolyzed (such as succinyl-Leu-Tyr-|-NHMec, and Leu-Tyr-Leu-|-Tyr-Trp, in which cleavage of the -Tyr-|-Leu- and -Tyr-|-Trp bonds also occurs).. Cleaves peptides in various proteins in a process that requires ATP hydrolysis. Has a chymotrypsin-like activity. Plays a major role in the degradation of misfolded proteins. This Frankia casuarinae (strain DSM 45818 / CECT 9043 / HFP020203 / CcI3) protein is ATP-dependent Clp protease proteolytic subunit 3.